Here is a 457-residue protein sequence, read N- to C-terminus: MFTQAVIALIGLVSIRTGKTEDVTPCTTNCGCWARLEKQITVYRGDYSAAEENLKENKKNFGKIIAATVLGSEKLKATVAPVLLSAAQIIHECEEALTTARPAILDAEKKVAELRALYDVQQKLKEGNGELQLHIQDDTNINTAKEVPKANLGNINKKGCADDLNTPDAATIDKTNIETEGPTPKVITHVHVEARCQRDGTPTNGCHDGQLGQNGKLEFSLTYDSKDTNDLATWLADTATKKQISATEVDFIGNLNTEANTAIKGLKSSNPAPACSKKIRDYKTIADNSKFNLMVTKALIGKTDAEAGQESKEPELAAAITKYYGTEGTKFEDQLWKAIERTPAYLGDQKKEQTTKIEKLETLTEVGEATARGLVKQLAAGAQARQTASGDDQSAENQCGGKKEDECKDGCELVEGVCKPVKQGEGENKEKTGTTNTTGSNSFVIKKAPLWLAFLLF.

The first 20 residues, 1-20, serve as a signal peptide directing secretion; it reads MFTQAVIALIGLVSIRTGKT. Residues 385-397 show a composition bias toward polar residues; that stretch reads RQTASGDDQSAEN. Residues 385–406 form a disordered region; it reads RQTASGDDQSAENQCGGKKEDE. An N-linked (GlcNAc...) asparagine glycan is attached at N436. S440 carries the GPI-anchor amidated serine lipid modification. Positions 441–457 are cleaved as a propeptide — removed in mature form; it reads NSFVIKKAPLWLAFLLF.

The protein resides in the cell membrane. Functionally, VSG forms a coat on the surface of the parasite. The trypanosome evades the immune response of the host by expressing a series of antigenically distinct VSGs from an estimated 1000 VSG genes. This chain is Variant surface glycoprotein 20, found in Trypanosoma equiperdum.